The chain runs to 162 residues: EF-hand calcium-binding domain-containing protein 11 (162 aa).

EF-hand domains are found at residues 18-53, 91-126, and 127-162; these read SERRKWVEVFKACDEDNKGYLSREDFKVAIVMLFGY, LYRNEIRHIFTAFDVHYRGFLTLEDFKRAFSQVAPK, and LPSRTVLEVFREADQDSDGHVSFRDFEYAMNHGKAK. Ca(2+) is bound by residues Asp-140, Asp-142, Asp-144, His-146, and Asp-151.

This is EF-hand calcium-binding domain-containing protein 11 (Efcab11) from Rattus norvegicus (Rat).